Consider the following 146-residue polypeptide: Hemoglobin subunit beta (146 aa).

Val-1 carries the post-translational modification N-acetylvaline. Residues 2 to 146 form the Globin domain; the sequence is HLTPEEKTAV…VANALAHKYH (145 aa). Thr-12 carries the phosphothreonine modification. A Phosphoserine modification is found at Ser-44. Lys-59 carries the post-translational modification N6-acetyllysine. His-63 contributes to the heme b binding site. An N6-acetyllysine modification is found at Lys-82. Position 92 (His-92) interacts with heme b. Position 93 is an S-nitrosocysteine (Cys-93). The residue at position 144 (Lys-144) is an N6-acetyllysine.

It belongs to the globin family. In terms of assembly, heterotetramer of two alpha chains and two beta chains. As to expression, red blood cells.

Involved in oxygen transport from the lung to the various peripheral tissues. This Chlorocebus aethiops (Green monkey) protein is Hemoglobin subunit beta (HBB).